The following is a 420-amino-acid chain: Tyrosine--tRNA ligase (420 aa).

Residue Y36 coordinates L-tyrosine. The 'HIGH' region signature appears at 41–50 (PTADSLHIGH). Residues Y170 and Q174 each coordinate L-tyrosine. Residues 231–235 (KFGKS) carry the 'KMSKS' region motif. Position 234 (K234) interacts with ATP. Residues 353–420 (TNIVEVLIET…KKKYFMVNYQ (68 aa)) form the S4 RNA-binding domain.

Belongs to the class-I aminoacyl-tRNA synthetase family. TyrS type 1 subfamily. As to quaternary structure, homodimer.

Its subcellular location is the cytoplasm. The enzyme catalyses tRNA(Tyr) + L-tyrosine + ATP = L-tyrosyl-tRNA(Tyr) + AMP + diphosphate + H(+). Functionally, catalyzes the attachment of tyrosine to tRNA(Tyr) in a two-step reaction: tyrosine is first activated by ATP to form Tyr-AMP and then transferred to the acceptor end of tRNA(Tyr). This is Tyrosine--tRNA ligase from Staphylococcus aureus (strain bovine RF122 / ET3-1).